Reading from the N-terminus, the 772-residue chain is Cellulosomal-scaffolding protein B (772 aa).

A Cohesin 1 domain is found at 1 to 80; sequence DPSKSFDSAI…TTFVAGGVNL (80 aa). Residues 81–93 are linker (Pro/Thr-rich); sequence GSSVPTTQPNVPS. In terms of domain architecture, Cohesin 2 spans 94 to 240; sequence DGVVVEIGKV…VNVGNATPTK (147 aa). Over residues 235–276 the composition is skewed to low complexity; it reads NATPTKGATPTNTATPTKSATATPPGHSVPTNTPTNTPANTP. 2 disordered regions span residues 235-277 and 438-464; these read NATP…NTPV and VVPS…PSDD. The segment at 241 to 272 is linker (Pro/Thr-rich); that stretch reads GATPTNTATPTKSATATPPGHSVPTNTPTNTP. The CBM3 domain maps to 277 to 435; the sequence is VSGNLKVEFY…GVLVWGKEPG (159 aa). Low complexity predominate over residues 438 to 461; sequence VVPSTQPVTTPPATTKPPATTIPP. A linker (Pro/Thr-rich) region spans residues 440-461; that stretch reads PSTQPVTTPPATTKPPATTIPP. One can recognise a Cohesin 3 domain in the interval 462-607; the sequence is SDDPNAIKIK…ETDLINGGVL (146 aa). In terms of domain architecture, Dockerin spans 704-771; that stretch reads IMMWVGDIVK…FGATSSDYDA (68 aa).

In terms of processing, O-glycosylated on most but not all Thr residues of the linker units.

The protein resides in the secreted. Its function is as follows. Acts as a scaffolding protein in the cellulosome. It promotes binding of cellulose to the catalytic domains of the cellulolytic enzymes probably through the binding of the nine repeated domains with dockerin domains present in catalytic subunits of the cellulosome. The protein is Cellulosomal-scaffolding protein B (cipB) of Acetivibrio thermocellus (Hungateiclostridium thermocellum).